Here is a 415-residue protein sequence, read N- to C-terminus: uncharacterized protein (415 aa).

This is an uncharacterized protein from Methanocaldococcus jannaschii (strain ATCC 43067 / DSM 2661 / JAL-1 / JCM 10045 / NBRC 100440) (Methanococcus jannaschii).